A 560-amino-acid chain; its full sequence is Membrane protein insertase YidC (560 aa).

The helical transmembrane segment at 7–27 (ILIVALAIVSYVMVLKWNQDY) threads the bilayer. Residues 38–56 (ASSTTTSGLPDTATGNNAA) show a composition bias toward polar residues. The segment at 38 to 76 (ASSTTTSGLPDTATGNNAAASDDIPRAASDTSAPAETPV) is disordered. 4 helical membrane-spanning segments follow: residues 367–387 (IVGNWGWSIIFLTMLIKGIFF), 437–457 (LGGCLPILVQMPVFLSLYWVL), 468–488 (FMLWITDLSIKDPFFILPIIM), and 515–535 (PIIFTFFFLWFPAGLVLYWVV).

This sequence belongs to the OXA1/ALB3/YidC family. Type 1 subfamily. Interacts with the Sec translocase complex via SecD. Specifically interacts with transmembrane segments of nascent integral membrane proteins during membrane integration.

The protein resides in the cell inner membrane. Required for the insertion and/or proper folding and/or complex formation of integral membrane proteins into the membrane. Involved in integration of membrane proteins that insert both dependently and independently of the Sec translocase complex, as well as at least some lipoproteins. Aids folding of multispanning membrane proteins. The sequence is that of Membrane protein insertase YidC from Pseudomonas fluorescens (strain Pf0-1).